The sequence spans 1480 residues: UDP-N-acetylglucosamine--peptide N-acetylglucosaminyltransferase (1480 aa).

TPR repeat units follow at residues 38–71, 113–146, 176–209, and 288–321; these read IFLY…SKQK, VQVL…STSN, ATIL…IKDP, and STIC…QPSF. Over residues 468-485 the composition is skewed to basic and acidic residues; the sequence is PQEKESPKSDKIASEKPL. The disordered stretch occupies residues 468–497; the sequence is PQEKESPKSDKIASEKPLVESNPGRSRTPS. TPR repeat units follow at residues 613–646 and 648–680; these read YEPF…NPRF and DGYL…DPDN. The interval 1093-1128 is disordered; it reads LSLDGSDATSSSVDSGIGSRTHSEAPIGGGDKDEGA. A compositionally biased stretch (polar residues) spans 1099-1112; that stretch reads DATSSSVDSGIGSR. UDP is bound by residues Q1269, K1272, 1333 to 1336, 1351 to 1353, and D1357; these read HIRR and GST.

The protein belongs to the glycosyltransferase 41 family. O-GlcNAc transferase subfamily.

It is found in the cytoplasm. The protein resides in the nucleus. It catalyses the reaction L-seryl-[protein] + UDP-N-acetyl-alpha-D-glucosamine = 3-O-(N-acetyl-beta-D-glucosaminyl)-L-seryl-[protein] + UDP + H(+). It carries out the reaction L-threonyl-[protein] + UDP-N-acetyl-alpha-D-glucosamine = 3-O-(N-acetyl-beta-D-glucosaminyl)-L-threonyl-[protein] + UDP + H(+). It functions in the pathway protein modification; protein glycosylation. Functionally, catalyzes the transfer of a single N-acetylglucosamine from UDP-GlcNAc to a serine or threonine residue in cytoplasmic and nuclear proteins resulting in their modification with a beta-linked N-acetylglucosamine (O-GlcNAc). The polypeptide is UDP-N-acetylglucosamine--peptide N-acetylglucosaminyltransferase (Giardia intestinalis (strain ATCC 50803 / WB clone C6) (Giardia lamblia)).